The chain runs to 138 residues: Sec-independent protein translocase protein TatB (138 aa).

A helical membrane pass occupies residues 2 to 18 (SFGEIIVILVVAILVLG). Residues 109-138 (NNLSGQNLNTEEKPNLSKLETQDKNGKINV) are disordered. Positions 118 to 138 (TEEKPNLSKLETQDKNGKINV) are enriched in basic and acidic residues.

Belongs to the TatB family. As to quaternary structure, the Tat system comprises two distinct complexes: a TatABC complex, containing multiple copies of TatA, TatB and TatC subunits, and a separate TatA complex, containing only TatA subunits. Substrates initially bind to the TatABC complex, which probably triggers association of the separate TatA complex to form the active translocon.

It localises to the cell inner membrane. Its function is as follows. Part of the twin-arginine translocation (Tat) system that transports large folded proteins containing a characteristic twin-arginine motif in their signal peptide across membranes. Together with TatC, TatB is part of a receptor directly interacting with Tat signal peptides. TatB may form an oligomeric binding site that transiently accommodates folded Tat precursor proteins before their translocation. This Campylobacter jejuni subsp. jejuni serotype O:2 (strain ATCC 700819 / NCTC 11168) protein is Sec-independent protein translocase protein TatB.